An 83-amino-acid polypeptide reads, in one-letter code: MRKGSLKEVLAKIKHDPREDERDYYIVIEHRGAYGNEKKIPVEMIELGHGYFFIGETQIPYHRIIRVVKGNGKVVWEKRRRKQ.

This sequence belongs to the UPF0248 family.

The protein is UPF0248 protein TGAM_1209 of Thermococcus gammatolerans (strain DSM 15229 / JCM 11827 / EJ3).